Reading from the N-terminus, the 396-residue chain is S-adenosylmethionine synthase (396 aa).

H16 contributes to the ATP binding site. D18 contributes to the Mg(2+) binding site. E44 contributes to the K(+) binding site. L-methionine is bound by residues E57 and Q100. Positions 100-110 (QSQDIARGVDN) are flexible loop. ATP is bound by residues 162–164 (DGK), 228–229 (RF), D237, 243–244 (RK), A260, and K264. Residue D237 participates in L-methionine binding. K268 is an L-methionine binding site.

Belongs to the AdoMet synthase family. In terms of assembly, homotetramer; dimer of dimers. Mg(2+) serves as cofactor. K(+) is required as a cofactor.

It is found in the cytoplasm. The enzyme catalyses L-methionine + ATP + H2O = S-adenosyl-L-methionine + phosphate + diphosphate. Its pathway is amino-acid biosynthesis; S-adenosyl-L-methionine biosynthesis; S-adenosyl-L-methionine from L-methionine: step 1/1. Functionally, catalyzes the formation of S-adenosylmethionine (AdoMet) from methionine and ATP. The overall synthetic reaction is composed of two sequential steps, AdoMet formation and the subsequent tripolyphosphate hydrolysis which occurs prior to release of AdoMet from the enzyme. The sequence is that of S-adenosylmethionine synthase from Myxococcus xanthus (strain DK1622).